Here is a 199-residue protein sequence, read N- to C-terminus: Recombination protein RecR (199 aa).

The C4-type zinc finger occupies 58–73; it reads CARCGNITSADLCDIC. Residues 81–176 form the Toprim domain; it reads GELCVVEDVA…QVTSLAQGVP (96 aa).

This sequence belongs to the RecR family.

May play a role in DNA repair. It seems to be involved in an RecBC-independent recombinational process of DNA repair. It may act with RecF and RecO. The chain is Recombination protein RecR from Cereibacter sphaeroides (strain ATCC 17025 / ATH 2.4.3) (Rhodobacter sphaeroides).